The sequence spans 277 residues: Large ribosomal subunit protein uL2 (277 aa).

2 disordered regions span residues 36-58 (PLHK…GGGH) and 219-277 (TVRG…RKNK). Residues 258-277 (KTRKKKNKSDKFIVRRRKNK) show a composition bias toward basic residues.

It belongs to the universal ribosomal protein uL2 family. As to quaternary structure, part of the 50S ribosomal subunit. Forms a bridge to the 30S subunit in the 70S ribosome.

One of the primary rRNA binding proteins. Required for association of the 30S and 50S subunits to form the 70S ribosome, for tRNA binding and peptide bond formation. It has been suggested to have peptidyltransferase activity; this is somewhat controversial. Makes several contacts with the 16S rRNA in the 70S ribosome. The sequence is that of Large ribosomal subunit protein uL2 from Bacillus velezensis (strain DSM 23117 / BGSC 10A6 / LMG 26770 / FZB42) (Bacillus amyloliquefaciens subsp. plantarum).